Here is a 282-residue protein sequence, read N- to C-terminus: Prohibitin-1 (282 aa).

The short motif at 106-109 (YQNL) is the AIM element.

It belongs to the prohibitin family. In terms of assembly, the mitochondrial prohibitin complex consists of two subunits (phb1 and phb2). The subunits assemble into a membrane-associated ring-shaped supercomplex of approximately 1 mDa.

The protein localises to the mitochondrion inner membrane. Its subcellular location is the cytoplasm. In terms of biological role, prohibitin probably acts as a holdase/unfoldase for the stabilization of newly synthesized mitochondrial proteins. Involved in mitophagy; may act as an adapter for atg8 that supports mitophagosome assembly. Negatively regulates the proteolytic processing of atg32 via the i-AAA protease. Acts as a negative regulator of the m-AAA protease. This chain is Prohibitin-1 (phb1), found in Schizosaccharomyces pombe (strain 972 / ATCC 24843) (Fission yeast).